Here is a 441-residue protein sequence, read N- to C-terminus: Nucleolar and spindle-associated protein 1 (441 aa).

2 disordered regions span residues 47-186 (ARKG…PNFK) and 216-267 (MNEL…LGLK). Polar residues-rich tracts occupy residues 56–74 (ESQT…ISNQ) and 100–116 (DSQQ…PTEF). The segment covering 117–126 (QNHEKQESQD) has biased composition (basic and acidic residues). Residue S124 is modified to Phosphoserine; by ATM. Position 135 is a phosphoserine (S135). Positions 152-171 (RDSKVPSEGKKSLYTDESSK) are enriched in basic and acidic residues. At T182 the chain carries Phosphothreonine. Positions 237 to 382 (GRLSVASTPI…HKGKLKPWGQ (146 aa)) are interaction with microtubules. Residue S240 is modified to Phosphoserine. Polar residues predominate over residues 241-264 (VASTPISQRRSQGRSCGPASQSTL). T244 is modified (phosphothreonine). Phosphoserine occurs at positions 247, 255, 269, 276, and 311. Residues 286–319 (AATKDNEHKRSLTKTPARKSAHVTVSGGTPKGEA) form a disordered region. Residues T314, T338, and T349 each carry the phosphothreonine modification. S352 and S363 each carry phosphoserine. Residues 384–390 (KENNYLN) carry the KEN box motif. The tract at residues 401-427 (KTYKQPHLQTKEEQRKKREQERKEKKA) is disordered. Positions 407-432 (HLQTKEEQRKKREQERKEKKAKVLGM) form a coiled coil. Over residues 409 to 424 (QTKEEQRKKREQERKE) the composition is skewed to basic and acidic residues. K411 is modified (N6-acetyllysine).

The protein belongs to the NUSAP family. As to quaternary structure, interacts with DNA and microtubules. Microtubule bundling is inhibited by IPO7, KPNA2 and KPNB1 while association with DNA is also inhibited by IPO7 and KPNA2. Post-translationally, ubiquitinated. Ubiquitination by FZR1 may lead to proteasome-dependent degradation of this protein. In terms of processing, phosphorylation by ATM in G2/M-phase induces mitotic arrest.

It localises to the cytoplasm. The protein resides in the nucleus. The protein localises to the nucleolus. Its subcellular location is the cytoskeleton. It is found in the spindle. It localises to the chromosome. In terms of biological role, microtubule-associated protein with the capacity to bundle and stabilize microtubules. May associate with chromosomes and promote the organization of mitotic spindle microtubules around them. The chain is Nucleolar and spindle-associated protein 1 (NUSAP1) from Homo sapiens (Human).